We begin with the raw amino-acid sequence, 206 residues long: Uracil phosphoribosyltransferase (206 aa).

5-phospho-alpha-D-ribose 1-diphosphate contacts are provided by residues Arg76, Arg101, and 128–136 (DPMLATGTT). Uracil-binding positions include Ile191 and 196 to 198 (GDA). 5-phospho-alpha-D-ribose 1-diphosphate is bound at residue Asp197.

This sequence belongs to the UPRTase family. It depends on Mg(2+) as a cofactor.

It catalyses the reaction UMP + diphosphate = 5-phospho-alpha-D-ribose 1-diphosphate + uracil. The protein operates within pyrimidine metabolism; UMP biosynthesis via salvage pathway; UMP from uracil: step 1/1. Allosterically activated by GTP. Its function is as follows. Catalyzes the conversion of uracil and 5-phospho-alpha-D-ribose 1-diphosphate (PRPP) to UMP and diphosphate. The polypeptide is Uracil phosphoribosyltransferase (Mycoplasma genitalium (strain ATCC 33530 / DSM 19775 / NCTC 10195 / G37) (Mycoplasmoides genitalium)).